The following is a 691-amino-acid chain: Calcium-binding and coiled-coil domain-containing protein 1 (691 aa).

The segment at 1–30 is p300 KIX-binding; the sequence is MEESSLSRAPSRGGVNFLNVARTYIPNTKV. The N-terminal AD (CTNNB1 binding site) stretch occupies residues 1–190; that stretch reads MEESSLSRAP…VQELEAALAT (190 aa). Serine 4 is modified (phosphoserine). Residues 45–125 are interaction with GATA1; sequence SDWIGIFKVE…FQFREPRPMD (81 aa). Coiled-coil stretches lie at residues 145-205, 232-339, and 417-514; these read KATV…YKGL, ELED…AELE, and QSME…ADEK. The tract at residues 501 to 691 is C-terminal AD (CTNNB1 binding site); interaction with CCAR1; the sequence is RKLEARLEKV…FSTQDPFTFE (191 aa). Positions 512–605 are disordered; it reads DEKWTEDAAT…DSEAEDEKSV (94 aa). A UBZ1-type zinc finger spans residues 653-679; sequence WKECPICKERFPAESDKDALEGHMDGH. Residues cysteine 656, cysteine 659, histidine 675, and histidine 679 each coordinate Zn(2+).

It belongs to the CALCOCO family. In terms of assembly, part of a calphoglin complex consisting of CALCOCO1, PPA1 and PGM. Interacts with the bHLH-PAS domains of GRIP1, AHR and ARNT. Interacts with CTNNB1 via both its N- and C-terminal regions. Interacts with EP300. Interacts with CCAR1 (via N-terminus) and GATA1. In terms of tissue distribution, expressed in all tissues examined except spleen, with high levels of expression in the heart and kidney.

The protein localises to the cytoplasm. It localises to the nucleus. In terms of biological role, functions as a coactivator for aryl hydrocarbon and nuclear receptors (NR). Recruited to promoters through its contact with the N-terminal basic helix-loop-helix-Per-Arnt-Sim (PAS) domain of transcription factors or coactivators, such as NCOA2. During ER-activation acts synergistically in combination with other NCOA2-binding proteins, such as EP300, CREBBP and CARM1. Involved in the transcriptional activation of target genes in the Wnt/CTNNB1 pathway. Functions as a secondary coactivator in LEF1-mediated transcriptional activation via its interaction with CTNNB1. Coactivator function for nuclear receptors and LEF1/CTNNB1 involves differential utilization of two different activation regions. In association with CCAR1 enhances GATA1- and MED1-mediated transcriptional activation from the gamma-globin promoter during erythroid differentiation of K562 erythroleukemia cells. The chain is Calcium-binding and coiled-coil domain-containing protein 1 (Calcoco1) from Mus musculus (Mouse).